Consider the following 212-residue polypeptide: Large ribosomal subunit protein bL25 (212 aa).

Residues 181–212 (LSEPKEEVIEEDVEEVSADVPTVSETEEEDAE) are disordered. Residues 188–197 (VIEEDVEEVS) show a composition bias toward acidic residues.

This sequence belongs to the bacterial ribosomal protein bL25 family. CTC subfamily. Part of the 50S ribosomal subunit; part of the 5S rRNA/L5/L18/L25 subcomplex. Contacts the 5S rRNA. Binds to the 5S rRNA independently of L5 and L18.

This is one of the proteins that binds to the 5S RNA in the ribosome where it forms part of the central protuberance. The sequence is that of Large ribosomal subunit protein bL25 from Finegoldia magna (strain ATCC 29328 / DSM 20472 / WAL 2508) (Peptostreptococcus magnus).